We begin with the raw amino-acid sequence, 301 residues long: GLABROUS1 enhancer-binding protein-like 2 (301 aa).

The interval 1-62 is disordered; it reads MATPTELGFS…NTKMASPPSN (62 aa). The span at 44–54 shows a compositional bias: basic residues; sequence KKKKKKTKHNT. The segment at 268–289 is non-canonical leucine-zipper; the sequence is LSNEWKALCVEELKLNINKLRF.

The protein belongs to the GeBP family. Homo- and heterodimers. Interacts with GEBP, GPL1 and GPL3. In terms of tissue distribution, expressed in the apical meristem and young leaf primordia. Detected in the vascular tissues of cotyledons and leaves, in hydathodes and in the septun of siliques, but not in roots.

The protein resides in the nucleus. Probable transcription factor. May play redundant roles with GEBP and GPL1 in cytokinin responses by regulating the transcript levels of type-A ARR response genes. Involved in stress responses. Plays a repressive role in cell expansion by counteracting the positive role of CPR5 in this process, but does not regulate cell proliferation or endoreduplication. In Arabidopsis thaliana (Mouse-ear cress), this protein is GLABROUS1 enhancer-binding protein-like 2.